We begin with the raw amino-acid sequence, 126 residues long: Histone H2B type 1-D (126 aa).

Positions 1–12 (MPEPTKSAPAPK) are enriched in low complexity. The tract at residues 1-36 (MPEPTKSAPAPKKGSKKAVTKAQKKDGKKRKRSRKE) is disordered. Proline 2 carries the N-acetylproline modification. ADP-ribosyl glutamic acid is present on glutamate 3. Lysine 6 is subject to N6-(2-hydroxyisobutyryl)lysine; alternate. Lysine 6 carries the post-translational modification N6-(beta-hydroxybutyryl)lysine; alternate. Lysine 6 bears the N6-acetyllysine; alternate mark. Lysine 6 carries the N6-butyryllysine; alternate modification. Lysine 6 is modified (N6-crotonyllysine; alternate). Lysine 6 carries the N6-lactoyllysine; alternate modification. Lysine 6 participates in a covalent cross-link: Glycyl lysine isopeptide (Lys-Gly) (interchain with G-Cter in SUMO2); alternate. ADP-ribosylserine is present on serine 7. Lysine 12 carries the N6-(beta-hydroxybutyryl)lysine; alternate modification. N6-acetyllysine; alternate is present on residues lysine 12 and lysine 13. N6-crotonyllysine; alternate is present on residues lysine 12 and lysine 13. An N6-lactoyllysine; alternate modification is found at lysine 12. Lysine 13 carries the post-translational modification N6-(2-hydroxyisobutyryl)lysine; alternate. Serine 15 carries the post-translational modification Phosphoserine; by STK4/MST1. Lysine 16, lysine 17, lysine 21, and lysine 24 each carry N6-acetyllysine; alternate. 4 positions are modified to N6-crotonyllysine; alternate: lysine 16, lysine 17, lysine 21, and lysine 24. Lysine 16, lysine 17, lysine 21, and lysine 24 each carry N6-lactoyllysine; alternate. An N6-(beta-hydroxybutyryl)lysine; alternate mark is found at lysine 17 and lysine 21. Lysine 17 carries the N6-glutaryllysine; alternate modification. An N6-(2-hydroxyisobutyryl)lysine; alternate mark is found at lysine 21 and lysine 24. Lysine 21 is modified (N6-butyryllysine; alternate). Lysine 21 is covalently cross-linked (Glycyl lysine isopeptide (Lys-Gly) (interchain with G-Cter in SUMO2); alternate). Position 25 is an N6-(2-hydroxyisobutyryl)lysine (lysine 25). An N6-(2-hydroxyisobutyryl)lysine; alternate modification is found at lysine 35. N6-(beta-hydroxybutyryl)lysine; alternate is present on lysine 35. An N6-crotonyllysine; alternate modification is found at lysine 35. N6-glutaryllysine; alternate is present on lysine 35. Lysine 35 carries the N6-succinyllysine; alternate modification. Lysine 35 participates in a covalent cross-link: Glycyl lysine isopeptide (Lys-Gly) (interchain with G-Cter in ubiquitin); alternate. The residue at position 36 (glutamate 36) is a PolyADP-ribosyl glutamic acid. Position 37 is a phosphoserine; by AMPK (serine 37). Lysine 44, lysine 47, and lysine 58 each carry N6-(2-hydroxyisobutyryl)lysine; alternate. Lysine 44 is modified (N6-lactoyllysine; alternate). N6-glutaryllysine; alternate is present on residues lysine 44 and lysine 47. Position 47 is an N6-methyllysine; alternate (lysine 47). Lysine 58 is subject to N6,N6-dimethyllysine; alternate. Position 80 is a dimethylated arginine (arginine 80). The residue at position 86 (lysine 86) is an N6-(2-hydroxyisobutyryl)lysine; alternate. Position 86 is an N6-(beta-hydroxybutyryl)lysine; alternate (lysine 86). Residue lysine 86 is modified to N6-acetyllysine; alternate. N6-lactoyllysine; alternate is present on lysine 86. An N6,N6,N6-trimethyllysine; alternate modification is found at lysine 86. 2 positions are modified to omega-N-methylarginine: arginine 87 and arginine 93. Lysine 109 is modified (N6-(2-hydroxyisobutyryl)lysine; alternate). Lysine 109 is subject to N6-lactoyllysine; alternate. Residue lysine 109 is modified to N6-glutaryllysine; alternate. Lysine 109 is modified (N6-methyllysine; alternate). Serine 113 carries O-linked (GlcNAc) serine glycosylation. Position 116 is a phosphothreonine (threonine 116). An N6-(2-hydroxyisobutyryl)lysine; alternate mark is found at lysine 117 and lysine 121. 2 positions are modified to N6-(beta-hydroxybutyryl)lysine; alternate: lysine 117 and lysine 121. N6-lactoyllysine; alternate is present on residues lysine 117 and lysine 121. 2 positions are modified to N6-glutaryllysine; alternate: lysine 117 and lysine 121. An N6-succinyllysine; alternate mark is found at lysine 117 and lysine 121. N6-malonyllysine; alternate is present on lysine 117. Residue lysine 117 is modified to N6-methylated lysine; alternate. Residue lysine 121 forms a Glycyl lysine isopeptide (Lys-Gly) (interchain with G-Cter in ubiquitin); alternate linkage.

The protein belongs to the histone H2B family. In terms of assembly, the nucleosome is a histone octamer containing two molecules each of H2A, H2B, H3 and H4 assembled in one H3-H4 heterotetramer and two H2A-H2B heterodimers. The octamer wraps approximately 147 bp of DNA. Post-translationally, monoubiquitination at Lys-35 (H2BK34Ub) by the MSL1/MSL2 dimer is required for histone H3 'Lys-4' (H3K4me) and 'Lys-79' (H3K79me) methylation and transcription activation at specific gene loci, such as HOXA9 and MEIS1 loci. Similarly, monoubiquitination at Lys-121 (H2BK120Ub) by the RNF20/40 complex gives a specific tag for epigenetic transcriptional activation and is also prerequisite for histone H3 'Lys-4' and 'Lys-79' methylation. It also functions cooperatively with the FACT dimer to stimulate elongation by RNA polymerase II. H2BK120Ub also acts as a regulator of mRNA splicing: deubiquitination by USP49 is required for efficient cotranscriptional splicing of a large set of exons. Phosphorylation at Ser-37 (H2BS36ph) by AMPK in response to stress promotes transcription. Phosphorylated on Ser-15 (H2BS14ph) by STK4/MST1 during apoptosis; which facilitates apoptotic chromatin condensation. Also phosphorylated on Ser-15 in response to DNA double strand breaks (DSBs), and in correlation with somatic hypermutation and immunoglobulin class-switch recombination. In terms of processing, glcNAcylation at Ser-113 promotes monoubiquitination of Lys-121. It fluctuates in response to extracellular glucose, and associates with transcribed genes. Post-translationally, ADP-ribosylated by PARP1 or PARP2 on Ser-7 (H2BS6ADPr) in response to DNA damage. H2BS6ADPr promotes recruitment of CHD1L. Mono-ADP-ribosylated on Glu-3 (H2BE2ADPr) by PARP3 in response to single-strand breaks. Poly ADP-ribosylation on Glu-36 (H2BE35ADPr) by PARP1 regulates adipogenesis: it inhibits phosphorylation at Ser-37 (H2BS36ph), thereby blocking expression of pro-adipogenetic genes. Crotonylation (Kcr) is specifically present in male germ cells and marks testis-specific genes in post-meiotic cells, including X-linked genes that escape sex chromosome inactivation in haploid cells. Crotonylation marks active promoters and enhancers and confers resistance to transcriptional repressors. It is also associated with post-meiotically activated genes on autosomes. In terms of processing, lactylated in macrophages by EP300/P300 by using lactoyl-CoA directly derived from endogenous or exogenous lactate, leading to stimulates gene transcription.

It localises to the nucleus. It is found in the chromosome. Core component of nucleosome. Nucleosomes wrap and compact DNA into chromatin, limiting DNA accessibility to the cellular machineries which require DNA as a template. Histones thereby play a central role in transcription regulation, DNA repair, DNA replication and chromosomal stability. DNA accessibility is regulated via a complex set of post-translational modifications of histones, also called histone code, and nucleosome remodeling. In Homo sapiens (Human), this protein is Histone H2B type 1-D.